A 192-amino-acid chain; its full sequence is Threonylcarbamoyl-AMP synthase (192 aa).

The region spanning 5 to 192 (TTSVAEAAHC…DATTGRVIRD (188 aa)) is the YrdC-like domain.

The protein belongs to the SUA5 family. TsaC subfamily.

The protein resides in the cytoplasm. It catalyses the reaction L-threonine + hydrogencarbonate + ATP = L-threonylcarbamoyladenylate + diphosphate + H2O. Required for the formation of a threonylcarbamoyl group on adenosine at position 37 (t(6)A37) in tRNAs that read codons beginning with adenine. Catalyzes the conversion of L-threonine, HCO(3)(-)/CO(2) and ATP to give threonylcarbamoyl-AMP (TC-AMP) as the acyladenylate intermediate, with the release of diphosphate. This is Threonylcarbamoyl-AMP synthase from Acinetobacter baylyi (strain ATCC 33305 / BD413 / ADP1).